A 156-amino-acid polypeptide reads, in one-letter code: Probable low-salt glycan biosynthesis epimerase Agl13 (156 aa).

Substrate contacts are provided by residues R19, E24, 39-41 (MSY), R51, H54, and H109.

Belongs to the dTDP-4-dehydrorhamnose 3,5-epimerase family.

It participates in protein modification; protein glycosylation. The protein operates within cell surface structure biogenesis; S-layer biogenesis. Functionally, epimerase involved in N-glycan biosynthetic pathway that takes place under low-salt conditions (1.75 M instead of 3.4 M). Participates in the formation of the tetrasaccharide present at 'Asn-532' of S-layer glycoprotein Csg, consisting of a sulfated hexose, 2 hexoses and rhamnose. Involved in the addition of final rhamnose (sugar 4) of the tetrasaccharide on the dolichol phosphate carrier. The sequence is that of Probable low-salt glycan biosynthesis epimerase Agl13 (agl13) from Haloferax volcanii (strain ATCC 29605 / DSM 3757 / JCM 8879 / NBRC 14742 / NCIMB 2012 / VKM B-1768 / DS2) (Halobacterium volcanii).